Here is a 204-residue protein sequence, read N- to C-terminus: Ras-related protein RABG1 (204 aa).

Residue 12 to 19 (GDSGVGKT) participates in GTP binding. An Effector region motif is present at residues 34–42 (HNSTIYVDL). Residues 60-64 (DTAGQ), 122-125 (NKTD), and 155-156 (SA) contribute to the GTP site. 2 S-geranylgeranyl cysteine lipidation sites follow: cysteine 202 and cysteine 204. Cysteine 204 carries the post-translational modification Cysteine methyl ester.

The protein belongs to the small GTPase superfamily. Rab family.

The protein localises to the cell membrane. Its function is as follows. Intracellular vesicle trafficking and protein transport. In Arabidopsis thaliana (Mouse-ear cress), this protein is Ras-related protein RABG1 (RABG1).